Consider the following 526-residue polypeptide: WRKY transcription factor 72A (526 aa).

2 stretches are compositionally biased toward basic and acidic residues: residues 40-52 (KERK…DDNS) and 60-76 (LTGD…KADM). Disordered stretches follow at residues 40 to 76 (KERK…KADM) and 170 to 200 (SSTK…QTWP). Residues 62-106 (GDKKDDQLESAKADMEEVMEENQRLKKHLDKIMKDYRNLQMQFHE) adopt a coiled-coil conformation. The span at 170–185 (SSTKSSPSNLSPENSL) shows a compositional bias: low complexity. Residues 232–298 (CDTPTMNDGC…YEGTHNHPLP (67 aa)) constitute a DNA-binding region (WRKY).

The protein belongs to the WRKY group II-b family. As to expression, expressed in roots, trichomes and fruits.

Its subcellular location is the nucleus. Transcription activator involved in the transcriptional regulation of terpene biosynthesis in glandular trichomes. Binds to the promoter of the linalool synthase TPS5 and promotes TPS5 gene transactivation. In association with WRKY72B, contributes to basal defense against root-knot nematodes (RKNs) and potato aphids, as well as Mi-1-mediated gene-for-gene resistance to these pests. Both WRKY72A and WRKY72B are not required for gene-for-gene resistance mediated by Pto, another tomato R gene. The protein is WRKY transcription factor 72A of Solanum lycopersicum (Tomato).